The following is a 272-amino-acid chain: Small ribosomal subunit protein uS2 (272 aa).

Residues 238 to 272 (ASKEEQTEEAEEETLSSKYREQDFQEAKSGARGEK) form a disordered region. The segment covering 255 to 272 (KYREQDFQEAKSGARGEK) has biased composition (basic and acidic residues).

It belongs to the universal ribosomal protein uS2 family.

This Protochlamydia amoebophila (strain UWE25) protein is Small ribosomal subunit protein uS2.